Consider the following 503-residue polypeptide: 26S proteasome non-ATPase regulatory subunit 5 (503 aa).

A2 bears the N-acetylalanine mark.

The protein belongs to the proteasome subunit S5B/HSM3 family. As to quaternary structure, interacts with PSMC1, PSMC2, PSMD1 and PSMD6. Part of transient complex containing PSMD5, PSMC2, PSMC1 and PSMD2 formed during the assembly of the 26S proteasome.

Acts as a chaperone during the assembly of the 26S proteasome, specifically of the base subcomplex of the PA700/19S regulatory complex (RC). In the initial step of the base subcomplex assembly is part of an intermediate PSMD5:PSMC2:PSMC1:PSMD2 module which probably assembles with a PSMD10:PSMC4:PSMC5:PAAF1 module followed by dissociation of PSMD5. In Bos taurus (Bovine), this protein is 26S proteasome non-ATPase regulatory subunit 5 (PSMD5).